A 341-amino-acid chain; its full sequence is UDP-3-O-(3-hydroxymyristoyl)glucosamine N-acyltransferase (341 aa).

The active-site Proton acceptor is His239.

It belongs to the transferase hexapeptide repeat family. LpxD subfamily. In terms of assembly, homotrimer.

It catalyses the reaction a UDP-3-O-[(3R)-3-hydroxyacyl]-alpha-D-glucosamine + a (3R)-hydroxyacyl-[ACP] = a UDP-2-N,3-O-bis[(3R)-3-hydroxyacyl]-alpha-D-glucosamine + holo-[ACP] + H(+). The enzyme catalyses UDP-3-O-[(3R)-3-hydroxytetradecanoyl]-alpha-D-glucosamine + (3R)-hydroxytetradecanoyl-[ACP] = UDP-2-N,3-O-bis[(3R)-3-hydroxytetradecanoyl]-alpha-D-glucosamine + holo-[ACP] + H(+). It participates in glycolipid biosynthesis; lipid IV(A) biosynthesis; lipid IV(A) from (3R)-3-hydroxytetradecanoyl-[acyl-carrier-protein] and UDP-N-acetyl-alpha-D-glucosamine: step 3/6. Its function is as follows. Catalyzes the N-acylation of UDP-3-O-(hydroxytetradecanoyl)glucosamine using 3-hydroxytetradecanoyl-ACP as the acyl donor. Is involved in the biosynthesis of lipid A, a phosphorylated glycolipid that anchors the lipopolysaccharide to the outer membrane of the cell. This is UDP-3-O-(3-hydroxymyristoyl)glucosamine N-acyltransferase from Escherichia coli (strain UTI89 / UPEC).